Consider the following 932-residue polypeptide: F-box protein COS111 (932 aa).

Residues 29–63 (VSAKHRPSSTGVYGHDASTVDHASRSNNNLNLTRS) are disordered. The span at 53–63 (RSNNNLNLTRS) shows a compositional bias: low complexity. Positions 146-193 (RKEISDLPDEVLRNILSNVKDDQRTLVNCLYVNKAFYNATKPTLYERP) constitute an F-box domain. Over residues 346–358 (LSEGKSSDNGNNG) the composition is skewed to polar residues. Disordered regions lie at residues 346–369 (LSEG…SVSS), 389–450 (TLSG…SNWF), 470–500 (ISSK…TEPF), and 863–893 (SVLP…SNDP). 2 stretches are compositionally biased toward low complexity: residues 395–431 (NNSS…SQID) and 438–447 (TSSKSTSSTS). The span at 876 to 890 (DDTNNGENTIAQPFS) shows a compositional bias: polar residues.

Functionally, F-box protein probably involved in ubiquitin conjugation pathway. This is F-box protein COS111 (COS111) from Candida glabrata (strain ATCC 2001 / BCRC 20586 / JCM 3761 / NBRC 0622 / NRRL Y-65 / CBS 138) (Yeast).